The chain runs to 416 residues: Imidazolonepropionase (416 aa).

Positions 81 and 83 each coordinate Fe(3+). Residues histidine 81 and histidine 83 each contribute to the Zn(2+) site. 4-imidazolone-5-propanoate-binding residues include arginine 90, tyrosine 153, and histidine 186. Tyrosine 153 serves as a coordination point for N-formimidoyl-L-glutamate. Histidine 251 provides a ligand contact to Fe(3+). Histidine 251 lines the Zn(2+) pocket. 4-imidazolone-5-propanoate is bound at residue glutamine 254. Aspartate 326 is a Fe(3+) binding site. Aspartate 326 contacts Zn(2+). Residues asparagine 328 and glycine 330 each contribute to the N-formimidoyl-L-glutamate site. Threonine 331 provides a ligand contact to 4-imidazolone-5-propanoate.

The protein belongs to the metallo-dependent hydrolases superfamily. HutI family. Requires Zn(2+) as cofactor. Fe(3+) is required as a cofactor.

The protein resides in the cytoplasm. It carries out the reaction 4-imidazolone-5-propanoate + H2O = N-formimidoyl-L-glutamate. Its pathway is amino-acid degradation; L-histidine degradation into L-glutamate; N-formimidoyl-L-glutamate from L-histidine: step 3/3. Catalyzes the hydrolytic cleavage of the carbon-nitrogen bond in imidazolone-5-propanoate to yield N-formimidoyl-L-glutamate. It is the third step in the universal histidine degradation pathway. This chain is Imidazolonepropionase, found in Paracidovorax citrulli (strain AAC00-1) (Acidovorax citrulli).